We begin with the raw amino-acid sequence, 386 residues long: Nucleosome assembly protein 1-like 4 (386 aa).

Residues 1-29 form a disordered region; it reads MADNSFSDGVPSDSLEAAKNASNTEKLTD. The residue at position 2 (Ala2) is an N-acetylalanine. Ser5, Ser7, and Ser12 each carry phosphoserine. The segment covering 20–29 has biased composition (polar residues); it reads NASNTEKLTD. Residue Ser49 is modified to Phosphoserine. Position 51 is a phosphothreonine (Thr51). Phosphoserine occurs at positions 53 and 54. The residue at position 58 (Thr58) is a Phosphothreonine. Position 105 is an N6-acetyllysine (Lys105). Ser125 carries the phosphoserine modification. Lys146 carries the post-translational modification N6-acetyllysine. The short motif at 265–271 is the Nuclear localization signal element; it reads IKKKQKH. Phosphoserine is present on Ser304. The span at 339–370 shows a compositional bias: acidic residues; that stretch reads AIEDDDNFEEGEEGEEEELEGDEEAEDDDDAE. The disordered stretch occupies residues 339–386; sequence AIEDDDNFEEGEEGEEEELEGDEEAEDDDDAEINPKKEPSQPSECKQQ.

Belongs to the nucleosome assembly protein (NAP) family. As to quaternary structure, interacts with core (H2A, H2B, H3, H4) and linker (H1) histones. In terms of processing, polyglutamylated and polyglycylated. These 2 modifications occur exclusively on glutamate residues and result in either polyglutamate or polyglycine chains on the gamma-carboxyl group. Both modifications can coexist on the same protein on adjacent residues, and lowering polyglycylation levels increases polyglutamylation, and reciprocally. Polyglutamylated by TTLL4. Post-translationally, phosphorylated at the G0/G1 boundary but it is not phosphorylated in S-phase. Phosphorylated protein remains in the cytoplasm in a complex with histones during the G0/G1 transition, whereas dephosphorylation triggers its transport into the nucleus at the G1/S-boundary.

The protein localises to the nucleus. It is found in the cytoplasm. In terms of biological role, acts as a histone chaperone in nucleosome assembly. This chain is Nucleosome assembly protein 1-like 4 (NAP1L4), found in Bos taurus (Bovine).